We begin with the raw amino-acid sequence, 294 residues long: Protoheme IX farnesyltransferase (294 aa).

9 helical membrane passes run 24–44, 48–68, 96–116, 118–138, 146–166, 172–192, 224–244, 245–265, and 268–288; these read VVLL…PGWV, LIAF…AINH, ALWF…LFVN, LTAL…TGYL, IVIG…AVTG, ALLL…ALAI, VLLL…WIYL, LGAL…YFTD, and VVAM…FVFL.

This sequence belongs to the UbiA prenyltransferase family. Protoheme IX farnesyltransferase subfamily.

It is found in the cell inner membrane. The enzyme catalyses heme b + (2E,6E)-farnesyl diphosphate + H2O = Fe(II)-heme o + diphosphate. Its pathway is porphyrin-containing compound metabolism; heme O biosynthesis; heme O from protoheme: step 1/1. Converts heme B (protoheme IX) to heme O by substitution of the vinyl group on carbon 2 of heme B porphyrin ring with a hydroxyethyl farnesyl side group. This chain is Protoheme IX farnesyltransferase, found in Legionella pneumophila (strain Paris).